The sequence spans 172 residues: Phosphopantetheine adenylyltransferase (172 aa).

Thr14 provides a ligand contact to substrate. ATP is bound by residues 14-15 and His22; that span reads TF. Substrate contacts are provided by Lys46, Leu78, and Arg92. ATP-binding positions include 93–95, Glu103, and 128–134; these read GMR and WLYISST.

The protein belongs to the bacterial CoaD family. As to quaternary structure, homohexamer. Requires Mg(2+) as cofactor.

The protein localises to the cytoplasm. It carries out the reaction (R)-4'-phosphopantetheine + ATP + H(+) = 3'-dephospho-CoA + diphosphate. It participates in cofactor biosynthesis; coenzyme A biosynthesis; CoA from (R)-pantothenate: step 4/5. Its function is as follows. Reversibly transfers an adenylyl group from ATP to 4'-phosphopantetheine, yielding dephospho-CoA (dPCoA) and pyrophosphate. The sequence is that of Phosphopantetheine adenylyltransferase from Solidesulfovibrio magneticus (strain ATCC 700980 / DSM 13731 / RS-1) (Desulfovibrio magneticus).